A 361-amino-acid chain; its full sequence is Chorismate synthase (361 aa).

Arg48 and Arg54 together coordinate NADP(+). Residues 131–133 (RSS), 243–244 (NA), Gly287, 302–306 (KPTSS), and Arg328 contribute to the FMN site.

Belongs to the chorismate synthase family. As to quaternary structure, homotetramer. FMNH2 is required as a cofactor.

It carries out the reaction 5-O-(1-carboxyvinyl)-3-phosphoshikimate = chorismate + phosphate. It functions in the pathway metabolic intermediate biosynthesis; chorismate biosynthesis; chorismate from D-erythrose 4-phosphate and phosphoenolpyruvate: step 7/7. Catalyzes the anti-1,4-elimination of the C-3 phosphate and the C-6 proR hydrogen from 5-enolpyruvylshikimate-3-phosphate (EPSP) to yield chorismate, which is the branch point compound that serves as the starting substrate for the three terminal pathways of aromatic amino acid biosynthesis. This reaction introduces a second double bond into the aromatic ring system. This is Chorismate synthase from Rhodopseudomonas palustris (strain BisA53).